The primary structure comprises 454 residues: Diaminobutyrate--2-oxoglutarate aminotransferase (454 aa).

The residue at position 287 (lysine 287) is an N6-(pyridoxal phosphate)lysine.

It belongs to the class-III pyridoxal-phosphate-dependent aminotransferase family. The cofactor is pyridoxal 5'-phosphate.

The catalysed reaction is L-2,4-diaminobutanoate + 2-oxoglutarate = L-aspartate 4-semialdehyde + L-glutamate. The protein operates within amine and polyamine biosynthesis; 1,3-diaminopropane biosynthesis; 1,3-diaminopropane from L-aspartate 4-semialdehyde: step 1/2. The protein is Diaminobutyrate--2-oxoglutarate aminotransferase (dat) of Haemophilus influenzae (strain ATCC 51907 / DSM 11121 / KW20 / Rd).